The sequence spans 333 residues: Na(+)-translocating ferredoxin:NAD(+) oxidoreductase complex subunit B (333 aa).

The tract at residues 1 to 27 (MLNAILVPVGILGVFGLIFGIGLAIAA) is hydrophobic. The 60-residue stretch at 33–92 (YEDPRVPLVRAALPGANCGGCGLPGCDALAANIVGGSAAIDACPVGGASCAAAVAEIMGM) folds into the 4Fe-4S domain. [4Fe-4S] cluster contacts are provided by Cys50, Cys53, Cys58, Cys75, Cys138, Cys142, Cys148, Cys152, Cys172, Cys175, Cys178, Cys182, Cys217, Cys220, Cys223, Cys227, Cys246, Cys249, Cys252, Cys256, Cys279, Cys282, Cys285, Cys289, Cys310, Cys313, Cys316, and Cys320. 4Fe-4S ferredoxin-type domains lie at 126–162 (REAM…IGED), 163–192 (GLPK…LVPE), 207–237 (KIAR…VENN), 239–266 (AKID…GDVE), 270–299 (STAY…GEIK), and 301–330 (PPYV…MRPN).

It belongs to the 4Fe4S bacterial-type ferredoxin family. RnfB subfamily. The complex is composed of six subunits: RnfA, RnfB, RnfC, RnfD, RnfE and RnfG. Requires [4Fe-4S] cluster as cofactor.

The protein localises to the cell membrane. It carries out the reaction 2 reduced [2Fe-2S]-[ferredoxin] + Na(+)(in) + NAD(+) + H(+) = 2 oxidized [2Fe-2S]-[ferredoxin] + Na(+)(out) + NADH. Part of a membrane-bound complex that couples electron transfer with translocation of ions across the membrane. Couples electron transfer from reduced ferredoxin to NAD(+) with electrogenic movement of Na(+) out of the cell. Involved in caffeate respiration. The sequence is that of Na(+)-translocating ferredoxin:NAD(+) oxidoreductase complex subunit B from Acetobacterium woodii (strain ATCC 29683 / DSM 1030 / JCM 2381 / KCTC 1655 / WB1).